We begin with the raw amino-acid sequence, 138 residues long: Small ribosomal subunit protein uS8c (138 aa).

This sequence belongs to the universal ribosomal protein uS8 family. Part of the 30S ribosomal subunit.

It localises to the plastid. It is found in the chloroplast. One of the primary rRNA binding proteins, it binds directly to 16S rRNA central domain where it helps coordinate assembly of the platform of the 30S subunit. The sequence is that of Small ribosomal subunit protein uS8c (rps8) from Oenothera elata subsp. hookeri (Hooker's evening primrose).